Consider the following 80-residue polypeptide: FXYD domain-containing ion transport regulator 7 (80 aa).

Residues 1-22 (MATPTQSPTNVPEETDPFFYDY) are Extracellular-facing. Residues T3, T5, and T9 are each glycosylated (O-linked (GlcNAc) threonine). Residues 23-45 (ATVQTVGMTLATIMFVLGIIIIL) traverse the membrane as a helical segment. At 46–80 (SKKVKCRKADSRSESPTCKSCKSELPSSAPGGGGV) the chain is on the cytoplasmic side. A disordered region spans residues 55–80 (DSRSESPTCKSCKSELPSSAPGGGGV). At S73 the chain carries Phosphoserine.

This sequence belongs to the FXYD family. Regulatory subunit of the sodium/potassium-transporting ATPase which is composed of a catalytic alpha subunit, a non-catalytic beta subunit and an additional regulatory subunit. The regulatory subunit, a member of the FXYD protein family, modulates the enzymatic activity in a tissue- and isoform-specific way by changing affinities of the Na+/K+-ATPase toward Na(+), K(+) or ATP. O-glycosylated; required for stabilization and translocation to the plasma membrane.

The protein localises to the cell membrane. Functionally, associates with and regulates the activity of the sodium/potassium-transporting ATPase (NKA) which catalyzes the hydrolysis of ATP coupled with the exchange of Na(+) and K(+) ions across the plasma membrane. Reduces the apparent affinity for external K(+), an effect that depends on the presence of external Na(+) and voltage. Increases the apparent affinity for intracellular Na(+). In Mus musculus (Mouse), this protein is FXYD domain-containing ion transport regulator 7 (Fxyd7).